A 97-amino-acid polypeptide reads, in one-letter code: Glutamyl-tRNA(Gln) amidotransferase subunit C (97 aa).

This sequence belongs to the GatC family. Heterotrimer of A, B and C subunits.

The enzyme catalyses L-glutamyl-tRNA(Gln) + L-glutamine + ATP + H2O = L-glutaminyl-tRNA(Gln) + L-glutamate + ADP + phosphate + H(+). The catalysed reaction is L-aspartyl-tRNA(Asn) + L-glutamine + ATP + H2O = L-asparaginyl-tRNA(Asn) + L-glutamate + ADP + phosphate + 2 H(+). In terms of biological role, allows the formation of correctly charged Asn-tRNA(Asn) or Gln-tRNA(Gln) through the transamidation of misacylated Asp-tRNA(Asn) or Glu-tRNA(Gln) in organisms which lack either or both of asparaginyl-tRNA or glutaminyl-tRNA synthetases. The reaction takes place in the presence of glutamine and ATP through an activated phospho-Asp-tRNA(Asn) or phospho-Glu-tRNA(Gln). This is Glutamyl-tRNA(Gln) amidotransferase subunit C from Sulfurisphaera tokodaii (strain DSM 16993 / JCM 10545 / NBRC 100140 / 7) (Sulfolobus tokodaii).